A 591-amino-acid chain; its full sequence is Indole-3-acetic acid-amido synthetase GH3.10 (591 aa).

The protein belongs to the IAA-amido conjugating enzyme family. In terms of tissue distribution, expressed in cotyledons and hypocotyls.

Catalyzes the synthesis of indole-3-acetic acid (IAA)-amino acid conjugates, providing a mechanism for the plant to cope with the presence of excess auxin. Involved in red light-specific hypocotyl elongation. May act downstream of a red light signal transduction and determine the degree of hypocotyl elongation. This Arabidopsis thaliana (Mouse-ear cress) protein is Indole-3-acetic acid-amido synthetase GH3.10.